The chain runs to 176 residues: MDLPGPIHDFLLVFLGSGLIVGGLGVVLLTNPIFSAFSLGLVLVCISLFFSLSNSYFVAAAQLLIYVGAINVLILFAVMFMNGSEYSKDLTLWTVGDGITSLVCTSIFISLITTILDTSWYGIIWTTKSNQIIEQDLIGNSQQIGIHLSTDFFLPFELISIILLVSLIGAIAVARQ.

5 helical membrane passes run 10 to 30, 32 to 52, 61 to 81, 92 to 112, and 152 to 172; these read FLLV…VLLT, PIFS…FFSL, AQLL…VMFM, LWTV…ISLI, and FFLP…GAIA.

Belongs to the complex I subunit 6 family. As to quaternary structure, NDH is composed of at least 16 different subunits, 5 of which are encoded in the nucleus.

Its subcellular location is the plastid. It localises to the chloroplast thylakoid membrane. It catalyses the reaction a plastoquinone + NADH + (n+1) H(+)(in) = a plastoquinol + NAD(+) + n H(+)(out). It carries out the reaction a plastoquinone + NADPH + (n+1) H(+)(in) = a plastoquinol + NADP(+) + n H(+)(out). Its function is as follows. NDH shuttles electrons from NAD(P)H:plastoquinone, via FMN and iron-sulfur (Fe-S) centers, to quinones in the photosynthetic chain and possibly in a chloroplast respiratory chain. The immediate electron acceptor for the enzyme in this species is believed to be plastoquinone. Couples the redox reaction to proton translocation, and thus conserves the redox energy in a proton gradient. This is NAD(P)H-quinone oxidoreductase subunit 6, chloroplastic (ndhG) from Oenothera argillicola (Appalachian evening primrose).